The following is a 599-amino-acid chain: Interleukin-18 receptor accessory protein (599 aa).

Residues 1–19 (MLCLGWIFLWLVAGERIKG) form the signal peptide. Residues 20 to 356 (FNISGCSTKK…TQSVQLKEKR (337 aa)) lie on the Extracellular side of the membrane. Residues Asn21, Asn119, and Asn152 are each glycosylated (N-linked (GlcNAc...) asparagine). The cysteines at positions 46 and 126 are disulfide-linked. 2 Ig-like C2-type domains span residues 149-235 (PQTN…WTVR) and 251-353 (PDIL…VQLK). 4 disulfides stabilise this stretch: Cys155–Cys180, Cys175–Cys221, Cys180–Cys221, and Cys273–Cys337. Residue Asn345 is glycosylated (N-linked (GlcNAc...) asparagine). The chain crosses the membrane as a helical span at residues 357 to 377 (GVVLLYILLGTIGTLVAVLAA). Over 378 to 599 (SALLYRHWIE…TGRSSQPKEW (222 aa)) the chain is Cytoplasmic. The TIR domain maps to 406–559 (KDFDAFVSYA…RFWAKMRYHM (154 aa)). The active site involves Glu493.

It belongs to the interleukin-1 receptor family. In terms of assembly, forms a ternary complex with IL18 and IL18R1. Within this complex, IL18R1 is involved in ligand-binding and IL18RAP in signaling leading to NF-kappa-B and JNK activation. Post-translationally, N-glycosylated. In terms of tissue distribution, detected in adrenal gland, bone marrow, brain, fetal brain, fetal liver, heart, kidney, lung, liver, peripheral blood leukocytes, placenta, prostate, salivary gland, skeletal muscle, spinal cord, testis, thymus, thyroid, trachea and uterus. Strongly expressed in peripheral blood leukocytes and spleen and, to a lesser extent, in colon. Specifically coexpressed with IL18R1 in T-helper 1 (Th1)cells.

It is found in the cell membrane. It carries out the reaction NAD(+) + H2O = ADP-D-ribose + nicotinamide + H(+). In terms of biological role, within the IL18 receptor complex, does not mediate IL18-binding, but involved in IL18-dependent signal transduction, leading to NF-kappa-B and JNK activation. May play a role in IL18-mediated IFNG synthesis from T-helper 1 (Th1) cells. This chain is Interleukin-18 receptor accessory protein, found in Homo sapiens (Human).